The chain runs to 415 residues: Squalene synthase clz20 (415 aa).

Residue Asn114 is glycosylated (N-linked (GlcNAc...) asparagine). Residues 395-415 (ADTMYLAVLVLGVFGVVAAIL) traverse the membrane as a helical segment.

Belongs to the phytoene/squalene synthase family. Requires Mg(2+) as cofactor.

The protein resides in the membrane. The catalysed reaction is 2 (2E,6E)-farnesyl diphosphate + NADH + H(+) = squalene + 2 diphosphate + NAD(+). It carries out the reaction 2 (2E,6E)-farnesyl diphosphate + NADPH + H(+) = squalene + 2 diphosphate + NADP(+). It functions in the pathway terpene metabolism; lanosterol biosynthesis; lanosterol from farnesyl diphosphate: step 1/3. In terms of biological role, squalene synthase; part of the gene cluster that mediates the biosynthesis of squalestatin S1 (SQS1, also known as zaragozic acid A), a heavily oxidized fungal polyketide that offers potent cholesterol lowering activity by targeting squalene synthase (SS). Catalyzes the condensation of 2 two farnesyl pyrophosphate moieties to form squalene. The presence of a gene encoding a squalene synthase supports the identification of the cluster as being responsible for SQS1 production and suggests a likely mechanism for self-resistance. This Cochliobolus lunatus (Filamentous fungus) protein is Squalene synthase clz20.